Here is a 686-residue protein sequence, read N- to C-terminus: Methionine--tRNA ligase (686 aa).

The 'HIGH' region motif lies at 15 to 25 (PYANGSIHLGH). Zn(2+)-binding residues include C146, C149, C159, and C162. The short motif at 332 to 336 (KMSKS) is the 'KMSKS' region element. K335 contributes to the ATP binding site. A disordered region spans residues 550 to 571 (AAAEAAAKEKAEAEKEQASQTE). The region spanning 585 to 686 (AFSAVDMRIA…EGAQPGMRVM (102 aa)) is the tRNA-binding domain.

Belongs to the class-I aminoacyl-tRNA synthetase family. MetG type 1 subfamily. As to quaternary structure, homodimer. Requires Zn(2+) as cofactor.

The protein localises to the cytoplasm. It carries out the reaction tRNA(Met) + L-methionine + ATP = L-methionyl-tRNA(Met) + AMP + diphosphate. Functionally, is required not only for elongation of protein synthesis but also for the initiation of all mRNA translation through initiator tRNA(fMet) aminoacylation. The chain is Methionine--tRNA ligase from Vibrio atlanticus (strain LGP32) (Vibrio splendidus (strain Mel32)).